The sequence spans 191 residues: Large ribosomal subunit protein bL9 (191 aa).

The disordered stretch occupies residues 171 to 191; the sequence is EDALKPEDFFNPEAELESEEE.

It belongs to the bacterial ribosomal protein bL9 family.

In terms of biological role, binds to the 23S rRNA. In Rhizobium meliloti (strain 1021) (Ensifer meliloti), this protein is Large ribosomal subunit protein bL9.